The chain runs to 356 residues: Probable scoulerine-9-O-methyltransferase OMT2B (356 aa).

S-adenosyl-L-methionine is bound at residue methionine 173. Aspartate 176 is a binding site for substrate. Residues threonine 177, glycine 202, aspartate 225, 245–246 (DI), and lysine 259 contribute to the S-adenosyl-L-methionine site. Position 260–264 (260–264 (YVLHN)) interacts with substrate. Catalysis depends on histidine 263, which acts as the Proton acceptor.

The protein belongs to the class I-like SAM-binding methyltransferase superfamily. Cation-independent O-methyltransferase family. COMT subfamily.

It carries out the reaction (S)-scoulerine + S-adenosyl-L-methionine = (S)-tetrahydrocolumbamine + S-adenosyl-L-homocysteine + H(+). It participates in alkaloid biosynthesis. Functionally, methyltransferase involved in the biosynthesis of the benzylisoquinoline alkaloid noscapine. Catalyzes the conversion of (S)-scoulerine to (S)-tetrahydrocolumbamine. The heterodimers OMT2B-SOMT3 and OMT2B-6OMT do not possess 3-O-acetyl-4'-O-demethylpapaveroxine 4'-O-methyltransferase activity. In Papaver somniferum (Opium poppy), this protein is Probable scoulerine-9-O-methyltransferase OMT2B.